We begin with the raw amino-acid sequence, 95 residues long: Large ribosomal subunit protein bL25 (95 aa).

Belongs to the bacterial ribosomal protein bL25 family. In terms of assembly, part of the 50S ribosomal subunit; part of the 5S rRNA/L5/L18/L25 subcomplex. Contacts the 5S rRNA. Binds to the 5S rRNA independently of L5 and L18.

In terms of biological role, this is one of the proteins that binds to the 5S RNA in the ribosome where it forms part of the central protuberance. This Shewanella oneidensis (strain ATCC 700550 / JCM 31522 / CIP 106686 / LMG 19005 / NCIMB 14063 / MR-1) protein is Large ribosomal subunit protein bL25.